The primary structure comprises 1630 residues: Separin (1630 aa).

Residues 1016 to 1037 (SKHSTGLKLCDSPRSSSMTPRG) form a disordered region. One can recognise a Peptidase C50 domain in the interval 1443–1542 (EDNISMILNP…SAAMKYYGKL (100 aa)). Cys-1531 is a catalytic residue.

May bind calcium. Interacts with PDS1. Interacts with MCD1.

It is found in the nucleus. It localises to the cytoplasm. Its subcellular location is the cytoskeleton. The protein localises to the microtubule organizing center. The protein resides in the spindle pole body. The catalysed reaction is All bonds known to be hydrolyzed by this endopeptidase have arginine in P1 and an acidic residue in P4. P6 is often occupied by an acidic residue or by a hydroxy-amino-acid residue, the phosphorylation of which enhances cleavage.. With respect to regulation, it is inactivated via its interaction with PDS1, which probably covers its active site. PDS1 degradation at anaphase, liberates it and triggers MCD1 cleavage. Caspase-like protease, which plays a central role in the chromosome segregation by cleaving the MCD1/SCC1 subunit of the cohesin complex at the onset of anaphase. During most of the cell cycle, it is inactivated by securin/PDS1 protein. It also promotes anaphase spindle elongation. A component of the FEAR (CDC14 early anaphase release) network which promotes CDC14 release from the nucleolus during early anaphase. Cleaves SLK19. In Saccharomyces cerevisiae (strain ATCC 204508 / S288c) (Baker's yeast), this protein is Separin (ESP1).